We begin with the raw amino-acid sequence, 611 residues long: Broad-specificity linear acyl-CoA dehydrogenase FadE5 (611 aa).

FAD-binding positions include 162–165, Ser-171, and Thr-198; that span reads MVLT. Ser-171 provides a ligand contact to a 2,3-saturated acyl-CoA. A 2,3-saturated acyl-CoA-binding positions include 224 to 225 and Arg-301; that span reads TK. Arg-326 is a binding site for FAD. Lys-338 provides a ligand contact to a 2,3-saturated acyl-CoA. 420–424 is an FAD binding site; the sequence is QTLGG. Glu-447 serves as a coordination point for a 2,3-saturated acyl-CoA. Residue Glu-447 is the Proton acceptor of the active site. Position 449 (Thr-449) interacts with FAD. Residues Asp-456 and 460-461 each bind a 2,3-saturated acyl-CoA; that span reads RK.

Belongs to the acyl-CoA dehydrogenase family. In terms of assembly, homodimer. It depends on FAD as a cofactor.

The catalysed reaction is a long-chain 2,3-saturated fatty acyl-CoA + oxidized [electron-transfer flavoprotein] + H(+) = a long-chain (2E)-enoyl-CoA + reduced [electron-transfer flavoprotein]. It catalyses the reaction a medium-chain 2,3-saturated fatty acyl-CoA + oxidized [electron-transfer flavoprotein] + H(+) = a medium-chain (2E)-enoyl-CoA + reduced [electron-transfer flavoprotein]. It carries out the reaction a short-chain 2,3-saturated fatty acyl-CoA + oxidized [electron-transfer flavoprotein] + H(+) = a short-chain (2E)-enoyl-CoA + reduced [electron-transfer flavoprotein]. The enzyme catalyses octadecanoyl-CoA + oxidized [electron-transfer flavoprotein] + H(+) = (2E)-octadecenoyl-CoA + reduced [electron-transfer flavoprotein]. The catalysed reaction is oxidized [electron-transfer flavoprotein] + hexadecanoyl-CoA + H(+) = (2E)-hexadecenoyl-CoA + reduced [electron-transfer flavoprotein]. It catalyses the reaction dodecanoyl-CoA + oxidized [electron-transfer flavoprotein] + H(+) = (2E)-dodecenoyl-CoA + reduced [electron-transfer flavoprotein]. It carries out the reaction decanoyl-CoA + oxidized [electron-transfer flavoprotein] + H(+) = (2E)-decenoyl-CoA + reduced [electron-transfer flavoprotein]. The enzyme catalyses hexanoyl-CoA + oxidized [electron-transfer flavoprotein] + H(+) = (2E)-hexenoyl-CoA + reduced [electron-transfer flavoprotein]. The catalysed reaction is butanoyl-CoA + oxidized [electron-transfer flavoprotein] + H(+) = (2E)-butenoyl-CoA + reduced [electron-transfer flavoprotein]. It participates in lipid metabolism; fatty acid metabolism. Acyl-CoA dehydrogenase that exhibits broad specificity for linear acyl-CoA substrates, with a preference for long-chain substrates. The polypeptide is Broad-specificity linear acyl-CoA dehydrogenase FadE5 (Mycobacterium tuberculosis (strain ATCC 25618 / H37Rv)).